The chain runs to 152 residues: Aspartate 1-decarboxylase (152 aa).

The Schiff-base intermediate with substrate; via pyruvic acid role is filled by S24. S24 is modified (pyruvic acid (Ser)). Substrate is bound at residue T56. Catalysis depends on Y57, which acts as the Proton donor. 72 to 74 (GAA) lines the substrate pocket.

The protein belongs to the PanD family. In terms of assembly, heterooctamer of four alpha and four beta subunits. Pyruvate serves as cofactor. Post-translationally, is synthesized initially as an inactive proenzyme, which is activated by self-cleavage at a specific serine bond to produce a beta-subunit with a hydroxyl group at its C-terminus and an alpha-subunit with a pyruvoyl group at its N-terminus.

It is found in the cytoplasm. It catalyses the reaction L-aspartate + H(+) = beta-alanine + CO2. The protein operates within cofactor biosynthesis; (R)-pantothenate biosynthesis; beta-alanine from L-aspartate: step 1/1. Functionally, catalyzes the pyruvoyl-dependent decarboxylation of aspartate to produce beta-alanine. The polypeptide is Aspartate 1-decarboxylase (Rhodospirillum centenum (strain ATCC 51521 / SW)).